Reading from the N-terminus, the 37-residue chain is Large ribosomal subunit protein bL36 (37 aa).

This sequence belongs to the bacterial ribosomal protein bL36 family.

The sequence is that of Large ribosomal subunit protein bL36 from Marinomonas sp. (strain MWYL1).